The following is a 194-amino-acid chain: Endonuclease V (194 aa).

Positions 31 and 95 each coordinate Mg(2+).

This sequence belongs to the endonuclease V family. Mg(2+) is required as a cofactor.

The protein localises to the cytoplasm. It catalyses the reaction Endonucleolytic cleavage at apurinic or apyrimidinic sites to products with a 5'-phosphate.. Its function is as follows. DNA repair enzyme involved in the repair of deaminated bases. Selectively cleaves double-stranded DNA at the second phosphodiester bond 3' to a deoxyinosine leaving behind the intact lesion on the nicked DNA. The sequence is that of Endonuclease V from Pyrococcus abyssi (strain GE5 / Orsay).